Here is an 84-residue protein sequence, read N- to C-terminus: Large ribosomal subunit protein bL27 (84 aa).

Residues 1-20 (MAHKKAGGSTRNGRDSNPKY) are disordered.

Belongs to the bacterial ribosomal protein bL27 family.

The chain is Large ribosomal subunit protein bL27 from Francisella tularensis subsp. tularensis (strain FSC 198).